The chain runs to 499 residues: Long chain base biosynthesis protein 2b (499 aa).

Residues 5–25 (VPYVTAATTLFSFGLIFGFGH) form a helical membrane-spanning segment. At Lys-322 the chain carries N6-(pyridoxal phosphate)lysine.

Belongs to the class-II pyridoxal-phosphate-dependent aminotransferase family. As to quaternary structure, heterodimer with LCB1. Component of the serine palmitoyltransferase (SPT) complex, composed of LCB1 and LCB2. Requires pyridoxal 5'-phosphate as cofactor.

It is found in the endoplasmic reticulum membrane. It catalyses the reaction L-serine + hexadecanoyl-CoA + H(+) = 3-oxosphinganine + CO2 + CoA. Its pathway is lipid metabolism; sphingolipid metabolism. Functionally, serine palmitoyltransferase (SPT). The heterodimer formed with LCB1 constitutes the catalytic core. The chain is Long chain base biosynthesis protein 2b from Oryza sativa subsp. japonica (Rice).